The chain runs to 200 residues: Protein RISC-INTERACTING CLEARING 3'-5' EXORIBONUCLEASE 1 (200 aa).

3 oligomerization regions span residues 35 to 66 (SKIL…KSEW), 102 to 127 (KFVT…IVIR), and 166 to 173 (DSIQSKWD).

Belongs to the RICE family. As to quaternary structure, homohexamer with DnaQ-like exonuclease fold in a ring-shaped structure with a central cavity. Component of AGO1 and AGO10-centered RNA-induced silencing complexes (RISC). Interacts with and acts as a cofactor of AGO1 and AGO10. As to expression, ubiquitously expressed throughout development in germinating seeds, cotyledons, leaves and roots of young seedlings and adult plants, stems and inflorescence.

Its subcellular location is the cytoplasm. It catalyses the reaction Exonucleolytic cleavage in the 3'- to 5'-direction to yield nucleoside 5'-phosphates.. Functionally, 3'-to-5' exoribonuclease (RNase) specifically targeting single-stranded RNAs. Triggers miRNA accumulation in RNA-induced silencing complex (RISC), composed of miRNAs and AGO proteins, by degrading uridylated cleavage fragments. Required during plant growth and development. This Arabidopsis thaliana (Mouse-ear cress) protein is Protein RISC-INTERACTING CLEARING 3'-5' EXORIBONUCLEASE 1.